We begin with the raw amino-acid sequence, 316 residues long: MKVLWVALVITLLAGCQAEVEPEPEPEVQLGQEWPGWQDSQPWEQALGRFWDYLRWVQTLSDQVQEELLSTQVIQELTVLMDETMKEVKAYREELEGQLAPIAQETQARVSKELQAAQARLASDMEDVRSRLAQYRSEVQAMMGQTTDELRGRLASHLRKLRKRLLRDAEDLQKRLAVYRAGALEGSERSVSAIRERLGPLVEQGRARAATVGTLASQTLRERAEAWHQKLRGRVEEMGTQARDHLEEMREQLEEVRAKVEEQGSQMRLQAEAFQARLKSWFEPLVEDMQRQWAGLVEKVQLAMATSSTSAPSENH.

The signal sequence occupies residues 1-18 (MKVLWVALVITLLAGCQA). Tandem repeats lie at residues 79-100 (VLMD…GQLA), 101-122 (PIAQ…ARLA), 123-144 (SDME…AMMG), 145-166 (QTTD…KRLL), 167-188 (RDAE…EGSE), 189-210 (RSVS…ARAA), 211-232 (TVGT…QKLR), and 233-254 (GRVE…EQLE). The 8 X 22 AA approximate tandem repeats stretch occupies residues 79–254 (VLMDETMKEV…HLEEMREQLE (176 aa)). Position 142 is a methionine sulfoxide (Met142). An LDL and other lipoprotein receptors binding region spans residues 157 to 167 (HLRKLRKRLLR). Position 161-164 (161-164 (LRKR)) interacts with heparin. The lipid-binding and lipoprotein association stretch occupies residues 209-289 (AATVGTLASQ…SWFEPLVEDM (81 aa)). Residue 228-235 (HQKLRGRV) coordinates heparin. The homooligomerization stretch occupies residues 265–316 (SQMRLQAEAFQARLKSWFEPLVEDMQRQWAGLVEKVQLAMATSSTSAPSENH). Residues 277–289 (RLKSWFEPLVEDM) form a specificity for association with VLDL region.

The protein belongs to the apolipoprotein A1/A4/E family. In terms of assembly, homotetramer. May interact with ABCA1; functionally associated with ABCA1 in the biogenesis of HDLs. May interact with APP/A4 amyloid-beta peptide; the interaction is extremely stable in vitro but its physiological significance is unclear. May interact with MAPT. May interact with MAP2. In the cerebrospinal fluid, interacts with secreted SORL1. Interacts with PMEL; this allows the loading of PMEL luminal fragment on ILVs to induce fibril nucleation. APOE exists as multiple glycosylated and sialylated glycoforms within cells and in plasma. The extent of glycosylation and sialylation are tissue and context specific. In terms of processing, glycated in plasma VLDL. Post-translationally, phosphorylated by FAM20C in the extracellular medium.

It localises to the secreted. The protein localises to the extracellular space. The protein resides in the extracellular matrix. It is found in the extracellular vesicle. Its subcellular location is the endosome. It localises to the multivesicular body. In terms of biological role, APOE is an apolipoprotein, a protein associating with lipid particles, that mainly functions in lipoprotein-mediated lipid transport between organs via the plasma and interstitial fluids. APOE is a core component of plasma lipoproteins and is involved in their production, conversion and clearance. Apolipoproteins are amphipathic molecules that interact both with lipids of the lipoprotein particle core and the aqueous environment of the plasma. As such, APOE associates with chylomicrons, chylomicron remnants, very low density lipoproteins (VLDL) and intermediate density lipoproteins (IDL) but shows a preferential binding to high-density lipoproteins (HDL). It also binds a wide range of cellular receptors including the LDL receptor/LDLR and the very low-density lipoprotein receptor/VLDLR that mediate the cellular uptake of the APOE-containing lipoprotein particles. Finally, APOE also has a heparin-binding activity and binds heparan-sulfate proteoglycans on the surface of cells, a property that supports the capture and the receptor-mediated uptake of APOE-containing lipoproteins by cells. The protein is Apolipoprotein E (APOE) of Lipotes vexillifer (Yangtze river dolphin).